The following is a 373-amino-acid chain: T-protein (373 aa).

The 90-residue stretch at 1-90 (MVAELTALRD…ESYSSENDKG (90 aa)) folds into the Chorismate mutase domain. In terms of domain architecture, Prephenate/arogenate dehydrogenase spans 99–361 (RPVVIVGGGG…DYAQRFQSES (263 aa)).

This sequence in the C-terminal section; belongs to the prephenate/arogenate dehydrogenase family.

Its subcellular location is the cytoplasm. It carries out the reaction chorismate = prephenate. The catalysed reaction is prephenate + NAD(+) = 3-(4-hydroxyphenyl)pyruvate + CO2 + NADH. Its pathway is amino-acid biosynthesis; L-tyrosine biosynthesis; (4-hydroxyphenyl)pyruvate from prephenate (NAD(+) route): step 1/1. It functions in the pathway metabolic intermediate biosynthesis; prephenate biosynthesis; prephenate from chorismate: step 1/1. In Escherichia coli (strain K12), this protein is T-protein (tyrA).